The sequence spans 250 residues: 2,3-bisphosphoglycerate-dependent phosphoglycerate mutase (250 aa).

Substrate is bound by residues 10 to 17 (RHGESQWN), 23 to 24 (TG), Arg62, 89 to 92 (ERHY), Lys100, 116 to 117 (RR), and 185 to 186 (GN). His11 (tele-phosphohistidine intermediate) is an active-site residue. Catalysis depends on Glu89, which acts as the Proton donor/acceptor.

It belongs to the phosphoglycerate mutase family. BPG-dependent PGAM subfamily. Homodimer.

It catalyses the reaction (2R)-2-phosphoglycerate = (2R)-3-phosphoglycerate. It participates in carbohydrate degradation; glycolysis; pyruvate from D-glyceraldehyde 3-phosphate: step 3/5. Its function is as follows. Catalyzes the interconversion of 2-phosphoglycerate and 3-phosphoglycerate. The chain is 2,3-bisphosphoglycerate-dependent phosphoglycerate mutase from Salmonella agona (strain SL483).